Here is a 131-residue protein sequence, read N- to C-terminus: Large-conductance mechanosensitive channel (131 aa).

2 helical membrane-spanning segments follow: residues 14-34 and 71-91; these read VMDM…VTSL and GNFI…FLLV.

The protein belongs to the MscL family. Homopentamer.

The protein resides in the cell inner membrane. Functionally, channel that opens in response to stretch forces in the membrane lipid bilayer. May participate in the regulation of osmotic pressure changes within the cell. The polypeptide is Large-conductance mechanosensitive channel (Dinoroseobacter shibae (strain DSM 16493 / NCIMB 14021 / DFL 12)).